We begin with the raw amino-acid sequence, 367 residues long: Probable butyrate kinase (367 aa).

This sequence belongs to the acetokinase family.

The protein localises to the cytoplasm. It carries out the reaction butanoate + ATP = butanoyl phosphate + ADP. This chain is Probable butyrate kinase, found in Bacillus anthracis (strain A0248).